The primary structure comprises 586 residues: Probable transporter AQR1 (586 aa).

2 disordered regions span residues methionine 1–alanine 44 and glutamate 61–glutamine 82. Topologically, residues methionine 1–lysine 99 are extracellular. Basic and acidic residues predominate over residues asparagine 19 to asparagine 40. A helical transmembrane segment spans residues tryptophan 100–tyrosine 120. Residues tyrosine 121–asparagine 139 are Cytoplasmic-facing. The chain crosses the membrane as a helical span at residues valine 140–alanine 160. Over aspartate 161 to arginine 166 the chain is Extracellular. The helical transmembrane segment at proline 167–proline 187 threads the bilayer. Position 188 (serine 188) is a topological domain, cytoplasmic. Residues tyrosine 189–isoleucine 209 traverse the membrane as a helical segment. Topologically, residues serine 210–threonine 225 are extracellular. A helical membrane pass occupies residues phenylalanine 226–alanine 246. The Cytoplasmic segment spans residues valine 247–arginine 255. The helical transmembrane segment at alanine 256–leucine 276 threads the bilayer. At proline 277–lysine 334 the chain is on the extracellular side. Residues isoleucine 335–tryptophan 355 form a helical membrane-spanning segment. Residues threonine 356–histidine 374 are Cytoplasmic-facing. A helical transmembrane segment spans residues leucine 375–phenylalanine 395. Residues threonine 396–leucine 433 lie on the Extracellular side of the membrane. The chain crosses the membrane as a helical span at residues valine 434–isoleucine 454. The Cytoplasmic segment spans residues aspartate 455 to arginine 459. Residues isoleucine 460–threonine 480 traverse the membrane as a helical segment. Residues serine 481–threonine 523 are Extracellular-facing. A helical membrane pass occupies residues valine 524–isoleucine 544. Over proline 545–asparagine 586 the chain is Cytoplasmic.

Belongs to the major facilitator superfamily. CAR1 family.

The protein resides in the membrane. Its function is as follows. Probable transporter that confers resistance to short-chain monocarboxylic acids and quinidine. This is Probable transporter AQR1 (AQR1) from Saccharomyces cerevisiae (strain ATCC 204508 / S288c) (Baker's yeast).